Consider the following 255-residue polypeptide: Probable septum site-determining protein MinC (255 aa).

Residues 103–115 (SHGRRPRGERSEE) are compositionally biased toward basic and acidic residues. Positions 103–136 (SHGRRPRGERSEEAAEAVPAAAEPVPAPAASPAP) are disordered. Pro residues predominate over residues 127–136 (VPAPAASPAP).

Belongs to the MinC family. Interacts with MinD and FtsZ.

Its function is as follows. Cell division inhibitor that blocks the formation of polar Z ring septums. Rapidly oscillates between the poles of the cell to destabilize FtsZ filaments that have formed before they mature into polar Z rings. Prevents FtsZ polymerization. The protein is Probable septum site-determining protein MinC of Ralstonia nicotianae (strain ATCC BAA-1114 / GMI1000) (Ralstonia solanacearum).